A 158-amino-acid chain; its full sequence is Large ribosomal subunit protein uL11 (158 aa).

Belongs to the universal ribosomal protein uL11 family. As to quaternary structure, part of the ribosomal stalk of the 50S ribosomal subunit. Interacts with L10 and the large rRNA to form the base of the stalk. L10 forms an elongated spine to which L12 dimers bind in a sequential fashion forming a multimeric L10(L12)X complex.

Forms part of the ribosomal stalk which helps the ribosome interact with GTP-bound translation factors. This is Large ribosomal subunit protein uL11 from Methanoregula boonei (strain DSM 21154 / JCM 14090 / 6A8).